A 656-amino-acid polypeptide reads, in one-letter code: Chaperone protein HtpG (656 aa).

The segment at methionine 1–arginine 359 is a; substrate-binding. The segment at glutamate 360–arginine 575 is b. The interval isoleucine 576–methionine 656 is c.

This sequence belongs to the heat shock protein 90 family. As to quaternary structure, homodimer.

The protein localises to the cytoplasm. Functionally, molecular chaperone. Has ATPase activity. This Mycobacterium leprae (strain TN) protein is Chaperone protein HtpG.